A 407-amino-acid chain; its full sequence is Ribonuclease Z (407 aa).

The interval 1 to 308 (MEITFLGTSS…QDFLHYAIPR (308 aa)) is ribonuclease Z. His62, His64, Asp66, His67, His139, Asp210, and His268 together coordinate Zn(2+). The Proton acceptor role is filled by Asp66. A unknown region spans residues 309–407 (DGQICAEMPP…VDWSALNVLF (99 aa)).

Belongs to the RNase Z family. In terms of assembly, homodimer. The cofactor is Zn(2+).

It catalyses the reaction Endonucleolytic cleavage of RNA, removing extra 3' nucleotides from tRNA precursor, generating 3' termini of tRNAs. A 3'-hydroxy group is left at the tRNA terminus and a 5'-phosphoryl group is left at the trailer molecule.. Zinc phosphodiesterase, which displays some tRNA 3'-processing endonuclease activity. Probably involved in tRNA maturation, by removing a 3'-trailer from precursor tRNA. The protein is Ribonuclease Z (rnz) of Thermosynechococcus vestitus (strain NIES-2133 / IAM M-273 / BP-1).